We begin with the raw amino-acid sequence, 58 residues long: Metallothionein-2B (58 aa).

The tract at residues 1-29 is beta; that stretch reads MPDPCCNDKCECKEGECKTGCKCKSCRCP. The a divalent metal cation site is built by Cys-5, Cys-6, Cys-10, Cys-12, Cys-17, Cys-21, Cys-23, Cys-26, Cys-28, Cys-31, Cys-34, Cys-38, Cys-40, Cys-46, Cys-50, Cys-54, Cys-56, and Cys-57. The tract at residues 30–58 is alpha; the sequence is PCDKCSSECKCTSKEECSKTCSKPCSCCP.

It belongs to the metallothionein superfamily. Type 3 family.

Its function is as follows. Binds six divalent metal ions. Known to bind copper and cadmium. The polypeptide is Metallothionein-2B (Callinectes sapidus (Blue crab)).